The sequence spans 165 residues: 2-C-methyl-D-erythritol 2,4-cyclodiphosphate synthase (165 aa).

Residues Asp12 and His14 each coordinate a divalent metal cation. Residues 12–14 (DIH) and 38–39 (HS) contribute to the 4-CDP-2-C-methyl-D-erythritol 2-phosphate site. Residue His46 participates in a divalent metal cation binding. 4-CDP-2-C-methyl-D-erythritol 2-phosphate contacts are provided by residues 60–62 (DIG), 136–139 (TTNE), and Arg146.

It belongs to the IspF family. Homotrimer. Requires a divalent metal cation as cofactor.

It catalyses the reaction 4-CDP-2-C-methyl-D-erythritol 2-phosphate = 2-C-methyl-D-erythritol 2,4-cyclic diphosphate + CMP. The protein operates within isoprenoid biosynthesis; isopentenyl diphosphate biosynthesis via DXP pathway; isopentenyl diphosphate from 1-deoxy-D-xylulose 5-phosphate: step 4/6. Involved in the biosynthesis of isopentenyl diphosphate (IPP) and dimethylallyl diphosphate (DMAPP), two major building blocks of isoprenoid compounds. Catalyzes the conversion of 4-diphosphocytidyl-2-C-methyl-D-erythritol 2-phosphate (CDP-ME2P) to 2-C-methyl-D-erythritol 2,4-cyclodiphosphate (ME-CPP) with a corresponding release of cytidine 5-monophosphate (CMP). The polypeptide is 2-C-methyl-D-erythritol 2,4-cyclodiphosphate synthase (Nostoc sp. (strain PCC 7120 / SAG 25.82 / UTEX 2576)).